The following is a 782-amino-acid chain: E3 ubiquitin-protein ligase SopA (782 aa).

The disordered stretch occupies residues 137-171; it reads VSVSANNRPTVSEGRTPPVSPSLSLQATSSPSSPA. Low complexity predominate over residues 157–171; that stretch reads PSLSLQATSSPSSPA. C753 serves as the catalytic Glycyl thioester intermediate.

The protein belongs to the SopA E3 ligase family. In terms of processing, ubiquitinated in the presence of host E1 ubiquitin-activating enzyme, E2 ubiquitin-conjugating enzyme and ubiquitin.

It localises to the secreted. The protein resides in the host cell. It carries out the reaction S-ubiquitinyl-[E2 ubiquitin-conjugating enzyme]-L-cysteine + [acceptor protein]-L-lysine = [E2 ubiquitin-conjugating enzyme]-L-cysteine + N(6)-ubiquitinyl-[acceptor protein]-L-lysine.. Functionally, effector proteins function to alter host cell physiology and promote bacterial survival in host tissues. This protein is an E3 ubiquitin ligase that interferes with host's ubiquitination pathway. For instance, prevents host innate immune response by ubiquitinating and thus sending to degradation host E3 ubiquitin ligases TRIM56 and TRIM65. The protein is E3 ubiquitin-protein ligase SopA (sopA) of Salmonella typhimurium (strain 14028s / SGSC 2262).